Here is a 169-residue protein sequence, read N- to C-terminus: E1B protein, small T-antigen (169 aa).

It belongs to the adenoviridae E1B 19 kDa protein family.

The protein is E1B protein, small T-antigen of Canis lupus familiaris (Dog).